We begin with the raw amino-acid sequence, 1219 residues long: Cullin-associated NEDD8-dissociated protein 1 (1219 aa).

At Ala2 the chain carries N-acetylalanine. HEAT repeat units follow at residues 44–81, 83–119, 209–244, 248–288, 327–363, 367–404, 423–460, 464–503, 599–636, 639–676, 808–848, 850–883, 927–964, 966–998, 1002–1039, 1043–1079, 1101–1137, and 1141–1180; these read DLEV…KVGE, RIVE…QIAP, KATV…AVGY, THLG…RCPR, EEDD…SRSE, KVYQ…QTGN, QEVS…VLPD, DHIG…SHAP, AELP…LHIN, CVLD…AYGD, KNCS…RKDL, AHAG…IAVG, SSVE…IEPE, LVPA…ERPE, EIIF…YKPN, GLLP…DDGL, NPSS…KCPS, and AVLD…ALRA. Residues 311–340 form a disordered region; sequence FTDNMEEDTDNETLEDEEDDESANEYTDDE. A compositionally biased stretch (acidic residues) spans 314–340; that stretch reads NMEEDTDNETLEDEEDDESANEYTDDE.

It belongs to the CAND family. Interacts with CUL1 and CUL4. Binds unneddylated CUL1, but cannot bind CUL1 once it has been neddylated. Highly expressed in roots. Expressed in stems, flowers and siliques.

Functionally, key assembly factor of SCF (SKP1-CUL1-F-box protein) E3 ubiquitin ligase complexes that promotes the exchange of the substrate-recognition F-box subunit in SCF complexes, thereby playing a key role in the cellular repertoire of SCF complexes. Acts as a F-box protein exchange factor. Required for SCF(TIR1) function. Modulates SCF(TIR1) function through its interactions with the CUL1 subunit. Represses photomorphogenesis by promoting HY5 degradation in darkness. The protein is Cullin-associated NEDD8-dissociated protein 1 (CAND1) of Arabidopsis thaliana (Mouse-ear cress).